Consider the following 331-residue polypeptide: D-lactate dehydrogenase (331 aa).

NAD(+) contacts are provided by residues 155-156, Asp-175, 206-207, Asn-212, 233-235, and Asp-259; these read HI, VP, and AAR. The active site involves Arg-235. Glu-264 is a catalytic residue. His-296 serves as the catalytic Proton donor.

It belongs to the D-isomer specific 2-hydroxyacid dehydrogenase family. As to quaternary structure, homodimer.

It catalyses the reaction (R)-lactate + NAD(+) = pyruvate + NADH + H(+). The protein is D-lactate dehydrogenase of Leuconostoc mesenteroides subsp. cremoris.